Here is a 635-residue protein sequence, read N- to C-terminus: Threonine--tRNA ligase (635 aa).

Positions 1–61 (MIKITLKDGK…HKDSSLEILT (61 aa)) constitute a TGS domain. The tract at residues 242–532 (DHRKLGKELD…LIEQYAGAFP (291 aa)) is catalytic. Zn(2+) is bound by residues cysteine 333, histidine 384, and histidine 509.

This sequence belongs to the class-II aminoacyl-tRNA synthetase family. As to quaternary structure, homodimer. The cofactor is Zn(2+).

It localises to the cytoplasm. The enzyme catalyses tRNA(Thr) + L-threonine + ATP = L-threonyl-tRNA(Thr) + AMP + diphosphate + H(+). Functionally, catalyzes the attachment of threonine to tRNA(Thr) in a two-step reaction: L-threonine is first activated by ATP to form Thr-AMP and then transferred to the acceptor end of tRNA(Thr). Also edits incorrectly charged L-seryl-tRNA(Thr). The sequence is that of Threonine--tRNA ligase from Clostridium botulinum (strain Langeland / NCTC 10281 / Type F).